The primary structure comprises 108 residues: N(4)-acetylcytidine amidohydrolase (108 aa).

Positions 5–102 (ITFFQRLERS…NDLFFISFRV (98 aa)) constitute an ASCH domain. Lys-20 functions as the Proton acceptor in the catalytic mechanism. The active-site Nucleophile is the Thr-23. Glu-73 acts as the Proton donor in catalysis.

This sequence belongs to the N(4)-acetylcytidine amidohydrolase family.

It carries out the reaction N(4)-acetylcytidine + H2O = cytidine + acetate + H(+). The enzyme catalyses N(4)-acetyl-2'-deoxycytidine + H2O = 2'-deoxycytidine + acetate + H(+). The catalysed reaction is N(4)-acetylcytosine + H2O = cytosine + acetate + H(+). In terms of biological role, catalyzes the hydrolysis of N(4)-acetylcytidine (ac4C). The sequence is that of N(4)-acetylcytidine amidohydrolase from Moritella marina (Vibrio marinus).